Here is a 281-residue protein sequence, read N- to C-terminus: Cytochrome bc1 complex cytochrome c subunit (281 aa).

The helical transmembrane segment at 17–37 (AAGAMALAVGLTGAGILVNAV) threads the bilayer. Cytochrome c domains are found at residues 52 to 132 (ALIQ…EANG) and 162 to 240 (ADVA…KSAK). Heme c contacts are provided by C65, C68, H69, C175, C178, and H179. A helical membrane pass occupies residues 259–279 (GMMMWLVGIVVLVAAAMWIGS).

As to quaternary structure, the cytochrome bc1 complex is composed of a cytochrome b (QcrB), the Rieske iron-sulfur protein (QcrA) and a diheme cytochrome c (QcrC) subunit. The bc1 complex forms a supercomplex with cytochrome c oxidase (cytochrome aa3). Post-translationally, binds 2 heme c groups covalently per subunit.

Its subcellular location is the cell membrane. It catalyses the reaction a quinol + 2 Fe(III)-[cytochrome c](out) = a quinone + 2 Fe(II)-[cytochrome c](out) + 2 H(+)(out). Cytochrome c1 subunit of the cytochrome bc1 complex, an essential component of the respiratory electron transport chain required for ATP synthesis. The bc1 complex catalyzes the oxidation of menaquinol and the reduction of cytochrome c in the respiratory chain. The bc1 complex operates through a Q-cycle mechanism that couples electron transfer to generation of the proton gradient that drives ATP synthesis. The sequence is that of Cytochrome bc1 complex cytochrome c subunit (qcrC) from Corynebacterium diphtheriae (strain ATCC 700971 / NCTC 13129 / Biotype gravis).